Consider the following 159-residue polypeptide: Putative viral CXC chemokine 2 (159 aa).

2 disulfide bridges follow: Cys50-Cys77 and Cys52-Cys93.

The protein belongs to the intercrine alpha (chemokine CxC) family.

The polypeptide is Putative viral CXC chemokine 2 (UL147) (Human cytomegalovirus (strain Towne) (HHV-5)).